The chain runs to 542 residues: Membrane protein insertase YidC (542 aa).

6 consecutive transmembrane segments (helical) span residues 6–26 (NILL…WQTD), 326–346 (LVVD…LLMF), 350–370 (FVGN…GGLY), 421–441 (GGCL…WVLL), 458–478 (LSVQ…MFLM), and 501–521 (VIFT…WLVG).

This sequence belongs to the OXA1/ALB3/YidC family. Type 1 subfamily. In terms of assembly, interacts with the Sec translocase complex via SecD. Specifically interacts with transmembrane segments of nascent integral membrane proteins during membrane integration.

The protein localises to the cell inner membrane. In terms of biological role, required for the insertion and/or proper folding and/or complex formation of integral membrane proteins into the membrane. Involved in integration of membrane proteins that insert both dependently and independently of the Sec translocase complex, as well as at least some lipoproteins. Aids folding of multispanning membrane proteins. In Shewanella frigidimarina (strain NCIMB 400), this protein is Membrane protein insertase YidC.